A 1342-amino-acid polypeptide reads, in one-letter code: DNA-directed RNA polymerase subunit beta (1342 aa).

The protein belongs to the RNA polymerase beta chain family. As to quaternary structure, the RNAP catalytic core consists of 2 alpha, 1 beta, 1 beta' and 1 omega subunit. When a sigma factor is associated with the core the holoenzyme is formed, which can initiate transcription.

It carries out the reaction RNA(n) + a ribonucleoside 5'-triphosphate = RNA(n+1) + diphosphate. In terms of biological role, DNA-dependent RNA polymerase catalyzes the transcription of DNA into RNA using the four ribonucleoside triphosphates as substrates. The sequence is that of DNA-directed RNA polymerase subunit beta from Histophilus somni (strain 129Pt) (Haemophilus somnus).